A 317-amino-acid chain; its full sequence is Porphobilinogen deaminase (317 aa).

Residue Cys-245 is modified to S-(dipyrrolylmethanemethyl)cysteine.

It belongs to the HMBS family. In terms of assembly, monomer. Dipyrromethane is required as a cofactor.

The catalysed reaction is 4 porphobilinogen + H2O = hydroxymethylbilane + 4 NH4(+). Its pathway is porphyrin-containing compound metabolism; protoporphyrin-IX biosynthesis; coproporphyrinogen-III from 5-aminolevulinate: step 2/4. It functions in the pathway porphyrin-containing compound metabolism; chlorophyll biosynthesis. Its function is as follows. Tetrapolymerization of the monopyrrole PBG into the hydroxymethylbilane pre-uroporphyrinogen in several discrete steps. This chain is Porphobilinogen deaminase, found in Parasynechococcus marenigrum (strain WH8102).